A 472-amino-acid chain; its full sequence is 3-isopropylmalate dehydratase large subunit (472 aa).

Cys347, Cys407, and Cys410 together coordinate [4Fe-4S] cluster.

This sequence belongs to the aconitase/IPM isomerase family. LeuC type 1 subfamily. As to quaternary structure, heterodimer of LeuC and LeuD. Requires [4Fe-4S] cluster as cofactor.

The catalysed reaction is (2R,3S)-3-isopropylmalate = (2S)-2-isopropylmalate. It participates in amino-acid biosynthesis; L-leucine biosynthesis; L-leucine from 3-methyl-2-oxobutanoate: step 2/4. Catalyzes the isomerization between 2-isopropylmalate and 3-isopropylmalate, via the formation of 2-isopropylmaleate. The polypeptide is 3-isopropylmalate dehydratase large subunit (Bacillus velezensis (strain DSM 23117 / BGSC 10A6 / LMG 26770 / FZB42) (Bacillus amyloliquefaciens subsp. plantarum)).